A 523-amino-acid chain; its full sequence is Factor arrest protein 8 (523 aa).

A coiled-coil region spans residues 26–76 (TKNERDRITWELERSEMKARIAELEGENRDLKHQLNQIQSKAVSPEGEKEE). A disordered region spans residues 61-80 (NQIQSKAVSPEGEKEEKHVP). The span at 71–80 (EGEKEEKHVP) shows a compositional bias: basic and acidic residues. Ser-115 carries the phosphoserine modification. At Thr-132 the chain carries Phosphothreonine. The interval 150–171 (ALLDTKPNPKQGPSESPSPTKV) is disordered. The segment covering 160 to 171 (QGPSESPSPTKV) has biased composition (polar residues).

Component of a complex at least composed of FAR3, FAR7, FAR8, FAR10, FAR11 and VPS64.

It is found in the cytoplasm. It localises to the endoplasmic reticulum. Participates in the control of the reentry into the cell cycle following pheromone treatment. In Saccharomyces cerevisiae (strain ATCC 204508 / S288c) (Baker's yeast), this protein is Factor arrest protein 8 (FAR8).